The sequence spans 404 residues: Transcriptional repressor OPI1 (404 aa).

At Ser-10 the chain carries Phosphoserine. The interval 25-51 is disordered; that stretch reads QSCRQKSQPSEDVSQADKMPASESSTT. The segment covering 26 to 37 has biased composition (polar residues); sequence SCRQKSQPSEDV. A basic motif region spans residues 109–138; that stretch reads KRQKLSRAIAKGKDNLKEYKLNMSIESKKR. Positions 139 to 160 are leucine-zipper; the sequence is LVTCLHLLKLANKQLSDKISCL. 3 disordered regions span residues 170-201, 305-327, and 378-404; these read HPLH…DEEF, LQQQ…SSVT, and QQQQ…DSKD. Positions 186–201 are enriched in acidic residues; the sequence is GEDETSSDEDDDDEEF. Positions 200–206 match the FFAT motif; the sequence is EFFDASE. A compositionally biased stretch (low complexity) spans 378-387; sequence QQQQYRQQQQ. Over residues 394 to 404 the composition is skewed to polar residues; it reads KPSQDNVDSKD.

In terms of assembly, interacts with SCS2.

Its subcellular location is the endoplasmic reticulum. The protein localises to the nucleus. In terms of biological role, negative regulator of the transcriptional complex INO2-INO4 in response to phospholipid precursor availability. When precursors become limiting, OPI1 is retained at the endoplasmic reticulum (ER) and INO2-INO4 activates INO1 and other genes required for phospholipid biosynthesis, whereas abundant precursor availability results in targeting of OPI1 to the nucleus to repress transcription of these genes. Binds directly to phosphatidic acid, which is required for ER targeting and may act as sensing mechanism for precursor availability, as phosphatidic acid becomes rapidly depleted upon phospholipid biosynthesis. This is Transcriptional repressor OPI1 (OPI1) from Saccharomyces cerevisiae (strain ATCC 204508 / S288c) (Baker's yeast).